The chain runs to 85 residues: Small ribosomal subunit protein bS16c (85 aa).

This sequence belongs to the bacterial ribosomal protein bS16 family.

It localises to the plastid. It is found in the chloroplast. This Nicotiana tabacum (Common tobacco) protein is Small ribosomal subunit protein bS16c.